The following is a 119-amino-acid chain: MHFKRGSEGHSLPLPCMHRSMQDISQHLKQWPRFVLQAGFYWPTTFKDAHGFVSSCDACQRKGNFTKRNEMPQHFILEVEVFDVWGIYFMKKTIFSWKPIHPNGGRLCLKMGGSSCEPH.

The protein resides in the mitochondrion. This is an uncharacterized protein from Arabidopsis thaliana (Mouse-ear cress).